The chain runs to 1988 residues: Sodium channel protein type 9 subunit alpha (1988 aa).

At 1–125 the chain is on the cytoplasmic side; the sequence is MAMLPPPGPQ…RRISIKILVH (125 aa). Positions 26–39 are enriched in basic and acidic residues; the sequence is RIAERKSKEPKEEK. Positions 26–55 are disordered; the sequence is RIAERKSKEPKEEKKDDDEEAPKPSSDLEA. The stretch at 112-410 is one I repeat; that stretch reads FSPLRRISIK…VAMAYEEQNQ (299 aa). Residues 126–145 traverse the membrane as a helical segment; it reads SLFSMLIMCTILTNCIFMTM. The Extracellular portion of the chain corresponds to 146–150; that stretch reads NNPPD. The helical transmembrane segment at 151 to 172 threads the bilayer; sequence WTKNVEYTFTGIYTFESLVKIL. Residues 173–185 are Cytoplasmic-facing; the sequence is ARGFCVGEFTFLR. The chain crosses the membrane as a helical span at residues 186-204; that stretch reads DPWNWLDFVVIVFAYLTEF. The Extracellular portion of the chain corresponds to 205–210; sequence VNLGNV. N209 is a glycosylation site (N-linked (GlcNAc...) asparagine). A helical membrane pass occupies residues 211–227; it reads SALRTFRVLRALKTISV. The Cytoplasmic portion of the chain corresponds to 228-241; the sequence is IPGLKTIVGALIQS. The helical transmembrane segment at 242–267 threads the bilayer; it reads VKKLSDVMILTVFCLSVFALIGLQLF. Residues 268-346 lie on the Extracellular side of the membrane; that stretch reads MGNLKHKCFR…PDYGYTSFDT (79 aa). Residues C275 and C324 are joined by a disulfide bond. The N-linked (GlcNAc...) asparagine glycan is linked to N283. An intramembrane region (pore-forming) is located at residues 347–363; sequence FSWAFLALFRLMTQDYW. Over 364–376 the chain is Extracellular; it reads ENLYQQTLRAAGK. The helical transmembrane segment at 377–402 threads the bilayer; that stretch reads TYMIFFVVVIFLGSFYLINLILAVVA. At 403–745 the chain is on the cytoplasmic side; that stretch reads MAYEEQNQAN…CIYFIVMDPF (343 aa). The span at 461–471 shows a compositional bias: low complexity; that stretch reads SSSETSKLSSK. Disordered stretches follow at residues 461–543 and 565–611; these read SSSE…RGSL and GSET…SPPM. Positions 474–486 are enriched in basic residues; sequence KERRNRRKKKNQK. Composition is skewed to basic and acidic residues over residues 489-510 and 573-585; these read SSGEEKGDAEKLSKSESEDSIR and DEHSIFGDNESRR. An II repeat occupies 726–989; that stretch reads CSPYWIKFKK…EEDPDANNLQ (264 aa). The helical transmembrane segment at 746–762 threads the bilayer; that stretch reads VDLAITICIVLNTLFMA. The Extracellular segment spans residues 763-771; the sequence is MEHHPMTEE. A helical transmembrane segment spans residues 772–796; it reads FKNVLAIGNLVFTGIFAAEMVLKLI. Residues 797–805 are Cytoplasmic-facing; that stretch reads AMDPYEYFQ. The chain crosses the membrane as a helical span at residues 806–822; the sequence is VGWNIFDSLIVTLSLVE. Over 823–831 the chain is Extracellular; it reads LFLADVEGL. Residues 832–848 form a helical membrane-spanning segment; the sequence is SVLRSFRLLRVFKLAKS. Over 849 to 865 the chain is Cytoplasmic; sequence WPTLNMLIKIIGNSVGA. Residues 866–888 traverse the membrane as a helical segment; sequence LGNLTLVLAIIVFIFAVVGMQLF. Residues 889-915 are Extracellular-facing; it reads GKSYKECVCKINDDCTLPRWHMNDFFH. C897 and C903 are disulfide-bonded. The pore-forming intramembrane region spans 916 to 928; that stretch reads SFLIVFRVLCGEW. Topologically, residues 929 to 940 are extracellular; the sequence is IETMWDCMEVAG. Residues C935 and C944 are joined by a disulfide bond. A helical transmembrane segment spans residues 941 to 967; the sequence is QAMCLIVYMMVMVIGNLVVLNLFLALL. Over 968–1187 the chain is Cytoplasmic; it reads LSSFSSDNLT…WWNIRKTCYK (220 aa). The tract at residues 1102-1148 is disordered; sequence NAEELSSDSDSEYSKVRLNRSSSSECSTVDNPLPGEGEEAEAEPMNS. Residues 1120 to 1131 are compositionally biased toward polar residues; that stretch reads NRSSSSECSTVD. The segment covering 1137–1148 has biased composition (acidic residues); that stretch reads EGEEAEAEPMNS. One copy of the III repeat lies at 1180–1488; the sequence is NIRKTCYKIV…KKYYNAMKKL (309 aa). The chain crosses the membrane as a helical span at residues 1188–1212; the sequence is IVEHSWFESFIVLMILLSSGALAFE. Residues 1213-1224 lie on the Extracellular side of the membrane; that stretch reads DIYIERKKTIKI. The chain crosses the membrane as a helical span at residues 1225–1250; the sequence is ILEYADKIFTYIFILEMLLKWIAYGY. Residues 1251–1252 are Cytoplasmic-facing; it reads KT. The chain crosses the membrane as a helical span at residues 1253-1278; that stretch reads YFTNAWCWLDFLIVDVSLVTLVANTL. The Extracellular portion of the chain corresponds to 1279 to 1287; the sequence is GYSDLGPIK. The chain crosses the membrane as a helical span at residues 1288 to 1304; the sequence is SLRTLRALRPLRALSRF. Residues 1305–1317 are Cytoplasmic-facing; the sequence is EGMRVVVNALIGA. The chain crosses the membrane as a helical span at residues 1318 to 1342; sequence IPSIMNVLLVCLIFWLIFSIMGVNL. Topologically, residues 1343–1394 are extracellular; the sequence is FAGKFYECINTTDGSRFPASQVPNRSECFALMNVSQNVRWKNLKVNFDNVGL. C1350 and C1370 form a disulfide bridge. N-linked (GlcNAc...) asparagine glycosylation is found at N1352, N1366, and N1375. An intramembrane region (pore-forming) is located at residues 1395–1405; the sequence is GYLSLLQVATF. Topologically, residues 1406–1431 are extracellular; the sequence is KGWTIIMYAAVDSVNVDKQPKYEYSL. The chain crosses the membrane as a helical span at residues 1432-1457; that stretch reads YMYIYFVVFIIFGSFFTLNLFIGVII. Residues 1458–1514 lie on the Cytoplasmic side of the membrane; it reads DNFNQQKKKLGGQDIFMTEEQKKYYNAMKKLGSKKPQKPIPRPGNKIQGCIFDLVTN. S1490 is modified (phosphoserine; by PKC). One copy of the IV repeat lies at 1497–1795; sequence IPRPGNKIQG…WEKFDPDATQ (299 aa). The helical transmembrane segment at 1515–1534 threads the bilayer; the sequence is QAFDISIMVLICLNMVTMMV. Residues 1535–1545 lie on the Extracellular side of the membrane; it reads EKEGQSQHMTE. Residues 1546 to 1567 form a helical membrane-spanning segment; the sequence is VLYWINVVFIILFTGECVLKLI. The Cytoplasmic segment spans residues 1568-1576; that stretch reads SLRHYYFTV. The helical transmembrane segment at 1577 to 1598 threads the bilayer; the sequence is GWNIFDFVVVIISIVGMFLADL. The Extracellular segment spans residues 1599–1607; that stretch reads IETYFVSPT. The chain crosses the membrane as a helical span at residues 1608–1627; it reads LFRVIRLARIGRILRLVKGA. Over 1628–1640 the chain is Cytoplasmic; that stretch reads KGIRTLLFALMMS. Residues 1641–1663 traverse the membrane as a helical segment; that stretch reads LPALFNIGLLLFLVMFIYAIFGM. The Extracellular portion of the chain corresponds to 1664-1686; the sequence is SNFAYVKKEDGINDMFNFETFGN. Positions 1687–1699 form an intramembrane region, pore-forming; sequence SMICLFQITTSAG. Topologically, residues 1700–1733 are extracellular; it reads WDGLLAPILNSKPPDCDPKKVHPGSSVEGDCGNP. Residues C1715 and C1730 are joined by a disulfide bond. The chain crosses the membrane as a helical span at residues 1734–1759; it reads SVGIFYFVSYIIISFLVVVNMYIAVI. The Cytoplasmic segment spans residues 1760 to 1988; that stretch reads LENFSVATEE…KGKDSKESKK (229 aa). Positions 1889-1918 constitute an IQ domain; sequence EDVSATVIQRAYRRYRLRQNVKNISSIYIK. The segment at 1934-1988 is disordered; it reads FDNVNENSSPEKTDATSSTTSPPSYDSVTKPDKEKYEQDRTEKEDKGKDSKESKK. Residues 1948 to 1961 are compositionally biased toward low complexity; sequence ATSSTTSPPSYDSV. Residues 1962–1988 show a composition bias toward basic and acidic residues; the sequence is TKPDKEKYEQDRTEKEDKGKDSKESKK.

It belongs to the sodium channel (TC 1.A.1.10) family. Nav1.7/SCN9A subfamily. As to quaternary structure, the Nav1.7 voltage-gated sodium channel consists of an ion-conducting alpha subunit SCN9A which is functional on its own regulated by one or more beta-1 (SCN1B), beta-2 (SCN2B), beta-3 (SCN3B) and beta-4 (SCN4B) subunits. SCN1B and SCN3B are non-covalently associated with SCN9A. SCN2B and SCN4B are disulfide-linked to SCN9A. SCN1B regulates channel inactivation. Interacts with NEDD4 and NEDD4L; regulates Nav1.7 activity most probably through ubiquitination and subsequent endocytosis. Interacts with TMEM233; modulates the gating properties of NaV1.7. Post-translationally, phosphorylation at Ser-1490 by PKC in a highly conserved cytoplasmic loop increases peak sodium currents. In terms of processing, ubiquitinated by NEDD4L; which may promote its endocytosis. Expressed strongly in dorsal root ganglion, with only minor levels elsewhere in the body, smooth muscle cells, MTC cell line and C-cell carcinoma. Also expressed in vagus nerves within the head and neck region. Isoform 1 is expressed preferentially in the central and peripheral nervous system. Isoform 2 is expressed preferentially in the dorsal root ganglion.

The protein resides in the cell membrane. It localises to the cell projection. It is found in the neuron projection. The protein localises to the axon. The enzyme catalyses Na(+)(in) = Na(+)(out). With respect to regulation, inhibited by tetrodotoxin. Weakly inhibited by saxitoxin. Inhibited by the spider huwentoxin-IV that binds the extracellular loop S3-S4 of repeat II. Inhibited by the spider protoxin-II that binds the extracellular loop S3-S4 of repeats II and IV. Inhibited by the scorpion alpha-toxins CvIV4 and AaH2. Inhibited by the conotoxin GVIIJ. Inhibited by the spider beta/delta-theraphotoxin-Pre1a. Pore-forming subunit of Nav1.7, a voltage-gated sodium (Nav) channel that directly mediates the depolarizing phase of action potentials in excitable membranes. Navs, also called VGSCs (voltage-gated sodium channels) or VDSCs (voltage-dependent sodium channels), operate by switching between closed and open conformations depending on the voltage difference across the membrane. In the open conformation they allow Na(+) ions to selectively pass through the pore, along their electrochemical gradient. The influx of Na(+) ions provokes membrane depolarization, initiating the propagation of electrical signals throughout cells and tissues. Nav1.7 plays a crucial role in controlling the excitability and action potential propagation from nociceptor neurons, thereby contributing to the sensory perception of pain. The sequence is that of Sodium channel protein type 9 subunit alpha from Homo sapiens (Human).